The primary structure comprises 254 residues: Bax inhibitor 1 homolog (254 aa).

The Cytoplasmic segment spans residues 1-43; that stretch reads MASTSNRNFFSSNMTQIPMDEKIRIALQFNNLSQSTKQTLTKV. The chain crosses the membrane as a helical span at residues 44 to 64; that stretch reads YCALAIGILTATVGVLFSMFI. The Lumenal portion of the chain corresponds to 65–66; it reads YR. The chain crosses the membrane as a helical span at residues 67–87; sequence PGFLMTLLLVIGSAILFATTP. The Cytoplasmic portion of the chain corresponds to 88-98; that stretch reads RTQDYKTQVKR. The helical transmembrane segment at 99–119 threads the bilayer; it reads FTLFNLVTFVTGMSSSGLIEL. Topologically, residues 120–126 are lumenal; it reads YMDINSS. Residues 127-147 form a helical membrane-spanning segment; sequence IVLNAFMATCGIFISFTLFSL. Topologically, residues 148–152 are cytoplasmic; it reads LTNKR. Residues 153 to 173 form a helical membrane-spanning segment; sequence LYIFIGSSLASLSIGIFVLAL. The Lumenal portion of the chain corresponds to 174–187; that stretch reads TRLFGGYSEPLDQL. The chain crosses the membrane as a helical span at residues 188–208; the sequence is FILAILASSVLFIIFDTQIMV. Over 209–217 the chain is Cytoplasmic; sequence HRIENLGEK. The helical intramembrane region spans 218-238; sequence DVLFHAFILFYDFVDLFRVIL. The Cytoplasmic portion of the chain corresponds to 239 to 254; it reads KILAKKENKNNNKSRR.

The protein belongs to the BI1 family.

The protein localises to the endoplasmic reticulum membrane. The polypeptide is Bax inhibitor 1 homolog (Dictyostelium discoideum (Social amoeba)).